Reading from the N-terminus, the 143-residue chain is AP-2 complex subunit sigma (143 aa).

This sequence belongs to the adaptor complexes small subunit family. In terms of assembly, adaptor protein complex 2 (AP-2) is a heterotetramer composed of two large adaptins (alpha-type subunit apl3 and beta-type subunit apl1), a medium chain (mu-type subunit apm4) and a small adaptin (sigma-type subunit aps2).

It is found in the cell membrane. The protein resides in the membrane. It localises to the coated pit. Component of the adaptor complexes which link clathrin to receptors in coated vesicles. Clathrin-associated protein complexes are believed to interact with the cytoplasmic tails of membrane proteins, leading to their selection and concentration. This chain is AP-2 complex subunit sigma (aps2), found in Schizosaccharomyces pombe (strain 972 / ATCC 24843) (Fission yeast).